A 362-amino-acid polypeptide reads, in one-letter code: sn-glycerol-3-phosphate import ATP-binding protein UgpC (362 aa).

Positions 4 to 235 constitute an ABC transporter domain; sequence LKLQAVTKSY…PATLFVASFI (232 aa). 37–44 lines the ATP pocket; that stretch reads GPSGCGKS.

The protein belongs to the ABC transporter superfamily. sn-glycerol-3-phosphate importer (TC 3.A.1.1.3) family. The complex is composed of two ATP-binding proteins (UgpC), two transmembrane proteins (UgpA and UgpE) and a solute-binding protein (UgpB).

The protein resides in the cell inner membrane. It catalyses the reaction sn-glycerol 3-phosphate(out) + ATP + H2O = sn-glycerol 3-phosphate(in) + ADP + phosphate + H(+). In terms of biological role, part of the ABC transporter complex UgpBAEC involved in sn-glycerol-3-phosphate (G3P) import. Responsible for energy coupling to the transport system. In Yersinia enterocolitica serotype O:8 / biotype 1B (strain NCTC 13174 / 8081), this protein is sn-glycerol-3-phosphate import ATP-binding protein UgpC.